Here is a 364-residue protein sequence, read N- to C-terminus: MSGNSIGQNFVVTTFGESHGVALGCIIDGCPPGLELTEADMQHDLDRRRPGTSRYTTARREPDEVRILSGVFEGKTTGTSIGLLIENTDQRSQDYSNIKDLFRPGHADYTYQQKYGMRDYRGGGRSSARETAMRVAAGAVAKKYLKQVHGIEIYGFMSQLGPICAQTIDLDQIEQNAFFFPDASKLEALDEYMRELKKSGDSIGAKISVIATGVPVGLGEPVFDRLDADIAHALMGINAVKGVEIGDGFGVVTQKGSEGRDLMSPQGFESNHAGGVLGGISSGQPIIAHIALKPTSSISVPGQSMTAQGEMAEVVTKGRHDPCVGIRAVPIAEAMLAIVLMDHLLRHRAQNQDVRSHTPVLGMR.

The segment at 41–60 is disordered; it reads MQHDLDRRRPGTSRYTTARR. Residues arginine 48 and arginine 54 each coordinate NADP(+). Residues 125 to 127, 238 to 239, glycine 278, 293 to 297, and arginine 319 each bind FMN; these read RSS, NA, and KPTSS.

This sequence belongs to the chorismate synthase family. As to quaternary structure, homotetramer. It depends on FMNH2 as a cofactor.

The catalysed reaction is 5-O-(1-carboxyvinyl)-3-phosphoshikimate = chorismate + phosphate. It participates in metabolic intermediate biosynthesis; chorismate biosynthesis; chorismate from D-erythrose 4-phosphate and phosphoenolpyruvate: step 7/7. Catalyzes the anti-1,4-elimination of the C-3 phosphate and the C-6 proR hydrogen from 5-enolpyruvylshikimate-3-phosphate (EPSP) to yield chorismate, which is the branch point compound that serves as the starting substrate for the three terminal pathways of aromatic amino acid biosynthesis. This reaction introduces a second double bond into the aromatic ring system. This Shewanella baltica (strain OS185) protein is Chorismate synthase.